The chain runs to 255 residues: Ribonuclease HII (255 aa).

The 183-residue stretch at 73-255 folds into the RNase H type-2 domain; it reads LYIGGIDEAG…HRKSFLKNIL (183 aa). Residues Asp-79, Glu-80, and Asp-171 each contribute to the a divalent metal cation site.

It belongs to the RNase HII family. It depends on Mn(2+) as a cofactor. Mg(2+) is required as a cofactor.

The protein localises to the cytoplasm. The enzyme catalyses Endonucleolytic cleavage to 5'-phosphomonoester.. Endonuclease that specifically degrades the RNA of RNA-DNA hybrids. This is Ribonuclease HII from Clostridioides difficile (strain 630) (Peptoclostridium difficile).